A 289-amino-acid polypeptide reads, in one-letter code: 4-hydroxybenzoate octaprenyltransferase (289 aa).

The next 8 membrane-spanning stretches (helical) occupy residues 23 to 43 (IGAL…TPGV), 46 to 66 (LWIL…GCVV), 99 to 119 (LFVV…TMTI), 141 to 161 (LPQV…FAAV), 163 to 183 (ESVP…AVAY), 213 to 233 (LIIG…GWLN), 234 to 254 (GLGW…VYQQ), and 268 to 288 (AFMN…MSYV).

It belongs to the UbiA prenyltransferase family. The cofactor is Mg(2+).

The protein localises to the cell inner membrane. The enzyme catalyses all-trans-octaprenyl diphosphate + 4-hydroxybenzoate = 4-hydroxy-3-(all-trans-octaprenyl)benzoate + diphosphate. The protein operates within cofactor biosynthesis; ubiquinone biosynthesis. In terms of biological role, catalyzes the prenylation of para-hydroxybenzoate (PHB) with an all-trans polyprenyl group. Mediates the second step in the final reaction sequence of ubiquinone-8 (UQ-8) biosynthesis, which is the condensation of the polyisoprenoid side chain with PHB, generating the first membrane-bound Q intermediate 3-octaprenyl-4-hydroxybenzoate. The polypeptide is 4-hydroxybenzoate octaprenyltransferase (Citrobacter koseri (strain ATCC BAA-895 / CDC 4225-83 / SGSC4696)).